The sequence spans 504 residues: Maturase K (504 aa).

The protein belongs to the intron maturase 2 family. MatK subfamily.

It localises to the plastid. The protein localises to the chloroplast. Functionally, usually encoded in the trnK tRNA gene intron. Probably assists in splicing its own and other chloroplast group II introns. In Hamamelis virginiana (Witch-hazel), this protein is Maturase K.